The sequence spans 30 residues: Hementerin (30 aa).

The cofactor is Ca(2+).

The protein resides in the secreted. With respect to regulation, fibrino(geno)lytic activity inhibited by EDTA but not by PMSF, E-64, 6-AHA and aprotinin. In terms of biological role, cleaves fibrinogen Aalpha (FGA), gamma (FGG) and Bbeta (FGB) chains. Degrades cross-linked fibrin. Has no amidolytic, plasminogenolytic or caseinolytic activity. Inhibits platelet aggregation induced by collagen (IC(50)=7.5ug/ml) and various other agonists, presumably via activation of a nitridergic pathway. Inhibition is accompanied by reduced ATP release from and surface expression of SELP and CD63 on platelets as well as increased intracellular levels of Ca(2+), cGMP and nitric oxide synthase activity. This Haementeria depressa (Leech) protein is Hementerin.